Reading from the N-terminus, the 217-residue chain is Adapter protein MecA (217 aa).

Belongs to the MecA family. In terms of assembly, homodimer.

Its function is as follows. Enables the recognition and targeting of unfolded and aggregated proteins to the ClpC protease or to other proteins involved in proteolysis. The protein is Adapter protein MecA of Listeria monocytogenes serovar 1/2a (strain ATCC BAA-679 / EGD-e).